A 318-amino-acid polypeptide reads, in one-letter code: Ribose-phosphate pyrophosphokinase 2 (318 aa).

Residue 96 to 101 (RQDKKD) coordinates ATP. Mg(2+) is bound by residues Asp128, His130, Asp139, and Asp143. His130 provides a ligand contact to ATP. Residues 212 to 227 (KDRVAILVDDMADTCG) form a binding of phosphoribosylpyrophosphate region.

This sequence belongs to the ribose-phosphate pyrophosphokinase family. Homodimer. The active form is probably a hexamer composed of 3 homodimers. Mg(2+) is required as a cofactor.

The catalysed reaction is D-ribose 5-phosphate + ATP = 5-phospho-alpha-D-ribose 1-diphosphate + AMP + H(+). Its pathway is metabolic intermediate biosynthesis; 5-phospho-alpha-D-ribose 1-diphosphate biosynthesis; 5-phospho-alpha-D-ribose 1-diphosphate from D-ribose 5-phosphate (route I): step 1/1. Activated by magnesium and inorganic phosphate. Competitively or non-competitively inhibited by ADP, 2,3-bisphosphoglyceride or GDP. Functionally, catalyzes the synthesis of phosphoribosylpyrophosphate (PRPP) that is essential for nucleotide synthesis. This chain is Ribose-phosphate pyrophosphokinase 2 (Prps2), found in Mus musculus (Mouse).